A 185-amino-acid polypeptide reads, in one-letter code: Ribosome-recycling factor (185 aa).

This sequence belongs to the RRF family.

The protein localises to the cytoplasm. Its function is as follows. Responsible for the release of ribosomes from messenger RNA at the termination of protein biosynthesis. May increase the efficiency of translation by recycling ribosomes from one round of translation to another. This is Ribosome-recycling factor from Shewanella sp. (strain W3-18-1).